We begin with the raw amino-acid sequence, 351 residues long: MTAHIAPATVPPSAPAAAGQDPAALLAHARREVLEAGRGLDEAGVLAVLRLPDEYLGDALALAHEVRMRWCGPEVEVEGIISLKTGGCPEDCHFCSQSGKFDSPVRSAWLDVPSLVEAARQTAATGATEFCIVAAVRGPDARLMSQVREGVAAIRAAVDINVACSLGMLTQDQVDELTAIGVHRYNHNLETSRSHFPKVVTTHSWEERWETCEMVRAAGMELCCGAILGVGESLEQRAELAAQLAVLEPDEVPLNFLNPRPGTPFGDYPPVQPRDALRAIAAFRLALPRTILRYSGGREITLGDLEAQGMLGGINAVIVGNYLTTLGRPAESDLKMLADLSMPIKSLQATL.

The 226-residue stretch at 73–298 (PEVEVEGIIS…RTILRYSGGR (226 aa)) folds into the Radical SAM core domain. [4Fe-4S] cluster contacts are provided by Cys88, Cys92, and Cys95. [2Fe-2S] cluster-binding residues include Cys131, Cys164, Cys223, and Arg293.

The protein belongs to the radical SAM superfamily. Biotin synthase family. In terms of assembly, homodimer. Requires [4Fe-4S] cluster as cofactor. [2Fe-2S] cluster is required as a cofactor.

It carries out the reaction (4R,5S)-dethiobiotin + (sulfur carrier)-SH + 2 reduced [2Fe-2S]-[ferredoxin] + 2 S-adenosyl-L-methionine = (sulfur carrier)-H + biotin + 2 5'-deoxyadenosine + 2 L-methionine + 2 oxidized [2Fe-2S]-[ferredoxin]. It participates in cofactor biosynthesis; biotin biosynthesis; biotin from 7,8-diaminononanoate: step 2/2. Its function is as follows. Catalyzes the conversion of dethiobiotin (DTB) to biotin by the insertion of a sulfur atom into dethiobiotin via a radical-based mechanism. This is Biotin synthase from Frankia alni (strain DSM 45986 / CECT 9034 / ACN14a).